We begin with the raw amino-acid sequence, 201 residues long: Large ribosomal subunit protein uL4 (201 aa).

The segment at 46–71 (QKTRAEVVGSGKKPWRQKGTGRARAG) is disordered.

Belongs to the universal ribosomal protein uL4 family. As to quaternary structure, part of the 50S ribosomal subunit.

Functionally, one of the primary rRNA binding proteins, this protein initially binds near the 5'-end of the 23S rRNA. It is important during the early stages of 50S assembly. It makes multiple contacts with different domains of the 23S rRNA in the assembled 50S subunit and ribosome. Forms part of the polypeptide exit tunnel. This is Large ribosomal subunit protein uL4 from Shewanella piezotolerans (strain WP3 / JCM 13877).